The sequence spans 293 residues: MPWIQLKLNTTGNQAESLGDVLVESGAVSVTFQDTHDNPVFEPLPGETRLWGDTDVIGLYDAETDMADVVAMLECHPQIGKGFIHKIEQLEDKDWEREWMDNFHPMRFGERLWICPSWRDVPDPTAVNVMLDPGLAFGTGTHPTTALCLQWLDSLDLNGKTLIDFGCGSGILAIAALKLGAARAIGIDIDPQAIQASRDNAQRNGVSERLELYLAKDQPAELSADVVVANILAGPLRELAPLISVLPTTGGHLGLSGVLATQAAGVAQAYEDKFILDPVAEKEEWCRITGIKK.

S-adenosyl-L-methionine-binding residues include Thr145, Gly166, Asp188, and Asn230.

The protein belongs to the methyltransferase superfamily. PrmA family.

The protein resides in the cytoplasm. It carries out the reaction L-lysyl-[protein] + 3 S-adenosyl-L-methionine = N(6),N(6),N(6)-trimethyl-L-lysyl-[protein] + 3 S-adenosyl-L-homocysteine + 3 H(+). Functionally, methylates ribosomal protein L11. The sequence is that of Ribosomal protein L11 methyltransferase from Yersinia pseudotuberculosis serotype O:3 (strain YPIII).